A 407-amino-acid polypeptide reads, in one-letter code: Aurofusarin biosynthesis cluster protein S (407 aa).

Residues 1–35 form the signal peptide; it reads MSKQKPSLWRALRALSFIISIPLLIQYLVLKWYST. N52, N174, N196, N274, and N312 each carry an N-linked (GlcNAc...) asparagine glycan. 2 FAS1 domains span residues 52–192 and 195–365; these read NLTV…DTVL and PNST…DSIL.

Might be part of an extracellular enzyme complex composed of GIP1, aurF, aurO and aurS.

It is found in the secreted. Its subcellular location is the extracellular space. It functions in the pathway pigment biosynthesis. Functionally, part of the gene cluster that mediates the biosynthesis of aurofusarin, a red mycelium pigment which is acting as a mycotoxin. The first step is performed by the polyketide synthase which condenses one acetyl-CoA and 6 malonyl-CoA units to form the first intermediate, the cyclic heptaketide and yellow pigment YWA1. The C2 hydroxyl group in the pyrone ring of YWA1 is probably formed during ring closure by an aldol-type cyclization reaction. The dehydratase aurZ then acts as the first tailoring enzyme in the aurofusarin biosynthetic pathway by converting YWA1 to nor-rubrofusarin. Nor-rubrofusarin is then methylated to rubrofusarin by the O-methyltransferase aurJ. Rubrofusarin is then transported across the plasma membrane by the rubrofusarin-specific pump aurT for further enzymatic processing by the extracellular complex composed of GIP1, aurF, aurO and aurS to yield aurofusarin. This is Aurofusarin biosynthesis cluster protein S from Gibberella zeae (strain ATCC MYA-4620 / CBS 123657 / FGSC 9075 / NRRL 31084 / PH-1) (Wheat head blight fungus).